The chain runs to 615 residues: Matrix metalloproteinase-25 (615 aa).

A propeptide spanning residues 1–162 (MCFPGSQISP…AAGLVRRRRR (162 aa)) is cleaved from the precursor. Residues 53-73 (ILRLPAFGLPLLALLLVPLLP) traverse the membrane as a helical segment. The Cysteine switch signature appears at 143–150 (PRCSLPDV). Zn(2+)-binding residues include C145 and H287. Residue E288 is part of the active site. The Zn(2+) site is built by H291 and H297. The interval 336 to 366 (VSQNPNARPTRKPLVPPPQPPAMPPDSPATP) is disordered. Residues 349–366 (LVPPPQPPAMPPDSPATP) show a composition bias toward pro residues. Hemopexin repeat units lie at residues 368–417 (PDRC…WEGL), 421–466 (VKVI…GLPP), 467–515 (GEDV…DGAP), and 516–562 (FAPD…WLDC). C371 and C562 form a disulfide bridge. The interval 547–582 (AESDSPQPIGPKWLDCPAPNSDPRVTSPPKTTSKTR) is disordered. A593 carries the GPI-anchor amidated alanine lipid modification. Positions 594 to 615 (SEQLSPLLLPLLPLVAGEVFSY) are cleaved as a propeptide — removed in mature form.

It belongs to the peptidase M10A family. Zn(2+) is required as a cofactor. Ca(2+) serves as cofactor. The precursor is cleaved by a furin endopeptidase.

It is found in the cell membrane. Its function is as follows. May activate progelatinase A. This chain is Matrix metalloproteinase-25 (Mmp25), found in Mus musculus (Mouse).